The sequence spans 335 residues: NmrA-like family domain-containing oxidoreductase lnbB (335 aa).

NADP(+)-binding positions include 14 to 18 (GTGNQ), 41 to 45 (RHPDS), 62 to 63 (DG), 83 to 85 (TNS), Lys-142, and 166 to 169 (YYEQ).

This sequence belongs to the NmrA-type oxidoreductase family.

Its pathway is secondary metabolite biosynthesis. Functionally, nmrA-like family domain-containing oxidoreductase; part of the lnb gene cluster that mediates the biosynthesis of diastereomeric piperazines. Lna and lnb clusters encode sets of enzymes that produce overlapping sets of previously undescribed metabolites such as piperazinomycin-like metabolites or morpholine. The lna and lnb biosynthetic pathways appear to be part of a signaling network that controls the formation of sclerotia, a resilient overwintering structure. One primary function of the non-canonical nonribosomal peptide synthetases lnaA and lnbA consists in the reduction of L-tyrosine. The presence in the clusters of tailoring enzymes such as the oxidoreductases lnaB, lnbB, lnaE or lnbE, as well as of the cytochrome P450 monooxygenases lnaC, lnaD, or lnbC, might explain formation of various diastereomeric piperazines. The chain is NmrA-like family domain-containing oxidoreductase lnbB from Aspergillus flavus (strain ATCC 200026 / FGSC A1120 / IAM 13836 / NRRL 3357 / JCM 12722 / SRRC 167).